The chain runs to 79 residues: Conotoxin Cal9.2a (79 aa).

A signal peptide spans 1–23 (MNCYLILTVALLLTSAMTGTTTA). Residues 24 to 33 (GQLNKKGVTL) constitute a propeptide that is removed on maturation. Disulfide bonds link Cys41–Cys58, Cys46–Cys68, and Cys48–Cys73.

As to expression, expressed by the venom duct.

It is found in the secreted. In terms of biological role, probable neurotoxin with unknown target. Possibly targets ion channels. The protein is Conotoxin Cal9.2a of Californiconus californicus (California cone).